Reading from the N-terminus, the 270-residue chain is tRNA pseudouridine synthase A (270 aa).

Aspartate 54 serves as the catalytic Nucleophile. Substrate is bound at residue tyrosine 112.

It belongs to the tRNA pseudouridine synthase TruA family. Homodimer.

The enzyme catalyses uridine(38/39/40) in tRNA = pseudouridine(38/39/40) in tRNA. Its function is as follows. Formation of pseudouridine at positions 38, 39 and 40 in the anticodon stem and loop of transfer RNAs. The polypeptide is tRNA pseudouridine synthase A (Bordetella bronchiseptica (strain ATCC BAA-588 / NCTC 13252 / RB50) (Alcaligenes bronchisepticus)).